The chain runs to 282 residues: Small ribosomal subunit protein uS2 (282 aa).

The interval 260-282 (KRRRSKVYKEEEREVVTNEDESR) is disordered. Basic and acidic residues predominate over residues 266–282 (VYKEEEREVVTNEDESR).

Belongs to the universal ribosomal protein uS2 family.

The chain is Small ribosomal subunit protein uS2 from Wolbachia sp. subsp. Drosophila simulans (strain wRi).